Here is a 294-residue protein sequence, read N- to C-terminus: 2-methoxy-6-polyprenyl-1,4-benzoquinol methylase, mitochondrial (294 aa).

A mitochondrion-targeting transit peptide spans 1 to 10; that stretch reads MALRSAAGRL. S-adenosyl-L-methionine is bound by residues Thr-100, Asp-136, and 166-167; that span reads DA.

The protein belongs to the class I-like SAM-binding methyltransferase superfamily. MenG/UbiE family. In terms of assembly, component of a multi-subunit COQ enzyme complex.

The protein resides in the mitochondrion inner membrane. The catalysed reaction is a 2-methoxy-6-(all-trans-polyprenyl)benzene-1,4-diol + S-adenosyl-L-methionine = a 5-methoxy-2-methyl-3-(all-trans-polyprenyl)benzene-1,4-diol + S-adenosyl-L-homocysteine + H(+). It functions in the pathway cofactor biosynthesis; ubiquinone biosynthesis. Its function is as follows. Methyltransferase required for the conversion of 2-polyprenyl-6-methoxy-1,4-benzoquinol (DDMQH2) to 2-polyprenyl-3-methyl-6-methoxy-1,4-benzoquinol (DMQH2). The polypeptide is 2-methoxy-6-polyprenyl-1,4-benzoquinol methylase, mitochondrial (Oryza sativa subsp. japonica (Rice)).